We begin with the raw amino-acid sequence, 630 residues long: MATSNNPRKFSEKIALHNQKQAEETAAFEEVMKDLSLTRAARLQLQKSQYLQLGPSRGQYYGGSLPNVNQIGSSSMDLSFQTPFQSSGLDTSRTTRHHGLVDRVYRERGRLGSPHRRPLSVDKHGRQADSCPYGTVYLSPPADTSWRRTNSDSALHQSTMTPTQAESFTGGPQDAHQKRVLLLTVPGMEETGSETDKTLSKQSWDSKKAGSRPKSCEVPGINIFPSADQENTAALIPATHNTGGSLPDLSTIHFPSPLPTPLDPEEPPFPALTSSGSTGSLAHLGVGGTGQGMNTPSSSPQRRPAVVSPLSLSTEARRQQAQQVPPTLSPLSPITQAVAMDALSLEQQLPYAFFTQAGSQQPPPQPQPPPPPPPVSQQQPPPPQVSVGLPQGGPLLPSASLTRGPQLPPLAVTVPSTLPQSPTESPGQPPMGIDVTSAPALQYRTGAGSPATQSPTSPVSNQGFSPGSSPQHTSTLGSVFGDAYYEQQMTARQANALSRQLEQFNMMENAISSSSLYNPGSTLNYSQAAMMGLSGSHGGLQDPQQLGYAGHGGIPNIILTVTGESPPSLSKELSSTLAGVSDVSFDSDHQFPLDELKIDPLTLDGLHMLNDPDMVLADPATEDTFRMDRL.

Residues serine 64 and serine 113 each carry the phosphoserine modification. Disordered regions lie at residues 142–174, 187–221, 256–331, and 356–475; these read ADTS…GPQD, GMEE…VPGI, SPLP…LSPL, and QAGS…HTST. At threonine 149 the chain carries Phosphothreonine. Phosphoserine; by SIK1 and SIK2 is present on serine 151. A compositionally biased stretch (polar residues) spans 151–167; that stretch reads SDSALHQSTMTPTQAES. Phosphothreonine is present on threonine 161. Residues 194–208 are compositionally biased toward basic and acidic residues; it reads ETDKTLSKQSWDSKK. Positions 242-258 match the Nuclear export signal motif; that stretch reads TGGSLPDLSTIHFPSPL. Pro residues predominate over residues 256 to 270; it reads SPLPTPLDPEEPPFP. Composition is skewed to polar residues over residues 292–301 and 310–331; these read GMNTPSSSPQ and LSLS…LSPL. The span at 361–384 shows a compositional bias: pro residues; it reads QPPPQPQPPPPPPPVSQQQPPPPQ. Over residues 385–394 the composition is skewed to low complexity; that stretch reads VSVGLPQGGP. Composition is skewed to polar residues over residues 414–426 and 450–475; these read VPST…TESP and PATQ…HTST.

This sequence belongs to the TORC family. As to quaternary structure, binds, as a tetramer, through its N-terminal region, with the bZIP domain of CREB1. 'Arg-314' in the bZIP domain of CREB1 is essential for this interaction. Interaction, via its C-terminal, with TAF4, enhances recruitment of TAF4 to CREB1. Interacts with 14-3-3 proteins, including YWHAE/14-3-3 epsilon. Interacts with calmodulin-dependent catalytic subunit PPP3CA/calcineurin A. In terms of processing, phosphorylation/dephosphorylation states of Ser-151 are required for regulating transduction of CREB activity. TORCs are inactive when phosphorylated, and active when dephosphorylated at this site. This primary site of phosphorylation is mediated by SIKs (SIK1 and SIK2), is regulated by cAMP and calcium levels and is dependent on the phosphorylation of SIKs by LKB1. Highly expressed in developing cortical neurons, peaking during dendrite development.

It is found in the cytoplasm. The protein resides in the nucleus. Its function is as follows. Transcriptional coactivator for CREB1 which activates transcription through both consensus and variant cAMP response element (CRE) sites. Acts as a coactivator, in the SIK/TORC signaling pathway, being active when dephosphorylated and acts independently of CREB1 'Ser-133' phosphorylation. Enhances the interaction of CREB1 with TAF4. Regulates the expression of specific CREB-activated genes such as the steroidogenic gene, StAR. Potent coactivator of PGC1alpha and inducer of mitochondrial biogenesis in muscle cells. In the hippocampus, involved in late-phase long-term potentiation (L-LTP) maintenance at the Schaffer collateral-CA1 synapses. May be required for dendritic growth of developing cortical neurons. In concert with SIK1, regulates the light-induced entrainment of the circadian clock. In response to light stimulus, coactivates the CREB-mediated transcription of PER1 which plays an important role in the photic entrainment of the circadian clock. The polypeptide is CREB-regulated transcription coactivator 1 (Crtc1) (Rattus norvegicus (Rat)).